The primary structure comprises 387 residues: 1-deoxy-D-xylulose 5-phosphate reductoisomerase (387 aa).

Residues Thr-10, Gly-11, Ser-12, Ile-13, Gly-36, Lys-37, Asn-38, and Asn-123 each contribute to the NADPH site. A 1-deoxy-D-xylulose 5-phosphate-binding site is contributed by Lys-124. Position 125 (Glu-125) interacts with NADPH. Residue Asp-149 participates in Mn(2+) binding. The 1-deoxy-D-xylulose 5-phosphate site is built by Ser-150, Glu-151, Ser-175, and His-198. Glu-151 serves as a coordination point for Mn(2+). Gly-204 serves as a coordination point for NADPH. Ser-211, Asn-216, Lys-217, and Glu-220 together coordinate 1-deoxy-D-xylulose 5-phosphate. A Mn(2+)-binding site is contributed by Glu-220.

Belongs to the DXR family. It depends on Mg(2+) as a cofactor. Requires Mn(2+) as cofactor.

The catalysed reaction is 2-C-methyl-D-erythritol 4-phosphate + NADP(+) = 1-deoxy-D-xylulose 5-phosphate + NADPH + H(+). Its pathway is isoprenoid biosynthesis; isopentenyl diphosphate biosynthesis via DXP pathway; isopentenyl diphosphate from 1-deoxy-D-xylulose 5-phosphate: step 1/6. Functionally, catalyzes the NADPH-dependent rearrangement and reduction of 1-deoxy-D-xylulose-5-phosphate (DXP) to 2-C-methyl-D-erythritol 4-phosphate (MEP). This Pelotomaculum thermopropionicum (strain DSM 13744 / JCM 10971 / SI) protein is 1-deoxy-D-xylulose 5-phosphate reductoisomerase.